The chain runs to 225 residues: NAD(P)H-quinone oxidoreductase subunit K, chloroplastic (225 aa).

The [4Fe-4S] cluster site is built by Cys-43, Cys-44, Cys-108, and Cys-139.

This sequence belongs to the complex I 20 kDa subunit family. As to quaternary structure, NDH is composed of at least 16 different subunits, 5 of which are encoded in the nucleus. [4Fe-4S] cluster serves as cofactor.

The protein localises to the plastid. It localises to the chloroplast thylakoid membrane. It carries out the reaction a plastoquinone + NADH + (n+1) H(+)(in) = a plastoquinol + NAD(+) + n H(+)(out). The enzyme catalyses a plastoquinone + NADPH + (n+1) H(+)(in) = a plastoquinol + NADP(+) + n H(+)(out). In terms of biological role, NDH shuttles electrons from NAD(P)H:plastoquinone, via FMN and iron-sulfur (Fe-S) centers, to quinones in the photosynthetic chain and possibly in a chloroplast respiratory chain. The immediate electron acceptor for the enzyme in this species is believed to be plastoquinone. Couples the redox reaction to proton translocation, and thus conserves the redox energy in a proton gradient. The sequence is that of NAD(P)H-quinone oxidoreductase subunit K, chloroplastic from Brachypodium distachyon (Purple false brome).